Reading from the N-terminus, the 301-residue chain is Probable 5-dehydro-4-deoxyglucarate dehydratase (301 aa).

This sequence belongs to the DapA family.

It catalyses the reaction 5-dehydro-4-deoxy-D-glucarate + H(+) = 2,5-dioxopentanoate + CO2 + H2O. It participates in carbohydrate acid metabolism; D-glucarate degradation; 2,5-dioxopentanoate from D-glucarate: step 2/2. In Cereibacter sphaeroides (strain ATCC 17023 / DSM 158 / JCM 6121 / CCUG 31486 / LMG 2827 / NBRC 12203 / NCIMB 8253 / ATH 2.4.1.) (Rhodobacter sphaeroides), this protein is Probable 5-dehydro-4-deoxyglucarate dehydratase.